Here is a 380-residue protein sequence, read N- to C-terminus: Queuine tRNA-ribosyltransferase (380 aa).

D96 (proton acceptor) is an active-site residue. Substrate-binding positions include 96-100 (DSGGF), D150, Q193, and G220. The tract at residues 251 to 257 (GVGAPDS) is RNA binding. D270 acts as the Nucleophile in catalysis. Residues 275–279 (TRIAR) are RNA binding; important for wobble base 34 recognition. Zn(2+) is bound by residues C308, C310, C313, and H339.

This sequence belongs to the queuine tRNA-ribosyltransferase family. As to quaternary structure, homodimer. Within each dimer, one monomer is responsible for RNA recognition and catalysis, while the other monomer binds to the replacement base PreQ1. Zn(2+) is required as a cofactor.

It carries out the reaction 7-aminomethyl-7-carbaguanine + guanosine(34) in tRNA = 7-aminomethyl-7-carbaguanosine(34) in tRNA + guanine. Its pathway is tRNA modification; tRNA-queuosine biosynthesis. In terms of biological role, catalyzes the base-exchange of a guanine (G) residue with the queuine precursor 7-aminomethyl-7-deazaguanine (PreQ1) at position 34 (anticodon wobble position) in tRNAs with GU(N) anticodons (tRNA-Asp, -Asn, -His and -Tyr). Catalysis occurs through a double-displacement mechanism. The nucleophile active site attacks the C1' of nucleotide 34 to detach the guanine base from the RNA, forming a covalent enzyme-RNA intermediate. The proton acceptor active site deprotonates the incoming PreQ1, allowing a nucleophilic attack on the C1' of the ribose to form the product. After dissociation, two additional enzymatic reactions on the tRNA convert PreQ1 to queuine (Q), resulting in the hypermodified nucleoside queuosine (7-(((4,5-cis-dihydroxy-2-cyclopenten-1-yl)amino)methyl)-7-deazaguanosine). This chain is Queuine tRNA-ribosyltransferase, found in Streptococcus equi subsp. zooepidemicus (strain H70).